We begin with the raw amino-acid sequence, 68 residues long: Large ribosomal subunit protein uL29 (68 aa).

Belongs to the universal ribosomal protein uL29 family.

The protein is Large ribosomal subunit protein uL29 of Chloroflexus aggregans (strain MD-66 / DSM 9485).